The primary structure comprises 364 residues: Probable dual-specificity RNA methyltransferase RlmN (364 aa).

E106 serves as the catalytic Proton acceptor. Residues 112–350 (YPQRNTVCIS…SCTVRDTRGR (239 aa)) form the Radical SAM core domain. C119 and C356 are joined by a disulfide. [4Fe-4S] cluster contacts are provided by C126, C130, and C133. S-adenosyl-L-methionine is bound by residues 177–178 (GE), S211, 234–236 (SLH), and N313. The S-methylcysteine intermediate role is filled by C356.

Belongs to the radical SAM superfamily. RlmN family. It depends on [4Fe-4S] cluster as a cofactor.

The protein localises to the cytoplasm. It catalyses the reaction adenosine(2503) in 23S rRNA + 2 reduced [2Fe-2S]-[ferredoxin] + 2 S-adenosyl-L-methionine = 2-methyladenosine(2503) in 23S rRNA + 5'-deoxyadenosine + L-methionine + 2 oxidized [2Fe-2S]-[ferredoxin] + S-adenosyl-L-homocysteine. The enzyme catalyses adenosine(37) in tRNA + 2 reduced [2Fe-2S]-[ferredoxin] + 2 S-adenosyl-L-methionine = 2-methyladenosine(37) in tRNA + 5'-deoxyadenosine + L-methionine + 2 oxidized [2Fe-2S]-[ferredoxin] + S-adenosyl-L-homocysteine. Functionally, specifically methylates position 2 of adenine 2503 in 23S rRNA and position 2 of adenine 37 in tRNAs. The sequence is that of Probable dual-specificity RNA methyltransferase RlmN from Mycobacterium ulcerans (strain Agy99).